A 247-amino-acid polypeptide reads, in one-letter code: tRNA pseudouridine synthase A (247 aa).

Asp52 serves as the catalytic Nucleophile. A substrate-binding site is contributed by Tyr110.

Belongs to the tRNA pseudouridine synthase TruA family. In terms of assembly, homodimer.

It carries out the reaction uridine(38/39/40) in tRNA = pseudouridine(38/39/40) in tRNA. Its function is as follows. Formation of pseudouridine at positions 38, 39 and 40 in the anticodon stem and loop of transfer RNAs. This is tRNA pseudouridine synthase A from Geobacter sp. (strain M21).